The following is a 486-amino-acid chain: Coronin-1B (486 aa).

Ser-2 is subject to Phosphoserine; by PKC. 5 WD repeats span residues 80–120, 130–170, 174–213, 217–260, and 265–305; these read GHTG…LTSP, GHTK…ELYR, LHPD…LVAE, AHEG…EPMA, and DSSN…PYIH. Positions 404-444 are disordered; it reads LKVSRRNVLSDSRPTSAARPAAPAPAAPAPAAAASSSLSGA. The segment covering 432 to 444 has biased composition (low complexity); it reads APAAAASSSLSGA. Residues 446 to 484 adopt a coiled-coil conformation; sequence EAGKLEEVMRELRALRALVKEQGERIGRLEEQLGRVENG.

Belongs to the WD repeat coronin family. As to quaternary structure, forms homooligomers, but does not form complexes with the other coronins. Interacts with Arp2/3 complex components, including ACTR2, ARPC1B and ARPC2. Binds actin. In terms of processing, phosphorylated in vivo by PKC in response to cholinergic stimulation. Phosphorylation on Ser-2 regulates the interaction with the Arp2/3 complex and cell motility in fibroblasts. Phosphorylation does not seem to affect subcellular location.

Its subcellular location is the cytoplasm. It localises to the cytoskeleton. The protein resides in the stress fiber. Its function is as follows. Regulates leading edge dynamics and cell motility in fibroblasts. May be involved in cytokinesis and signal transduction. The sequence is that of Coronin-1B (CORO1B) from Oryctolagus cuniculus (Rabbit).